A 197-amino-acid chain; its full sequence is Elongation factor Ts (197 aa).

The segment at 81–84 (TDFV) is involved in Mg(2+) ion dislocation from EF-Tu.

It belongs to the EF-Ts family.

The protein localises to the cytoplasm. Associates with the EF-Tu.GDP complex and induces the exchange of GDP to GTP. It remains bound to the aminoacyl-tRNA.EF-Tu.GTP complex up to the GTP hydrolysis stage on the ribosome. This Coprothermobacter proteolyticus (strain ATCC 35245 / DSM 5265 / OCM 4 / BT) protein is Elongation factor Ts.